The sequence spans 186 residues: Small ribosomal subunit protein uS5 (186 aa).

The S5 DRBM domain occupies 20 to 83 (FVDKLVHINR…EAAKRDMIFV (64 aa)).

Belongs to the universal ribosomal protein uS5 family. As to quaternary structure, part of the 30S ribosomal subunit. Contacts proteins S4 and S8.

Functionally, with S4 and S12 plays an important role in translational accuracy. Located at the back of the 30S subunit body where it stabilizes the conformation of the head with respect to the body. This chain is Small ribosomal subunit protein uS5, found in Brucella anthropi (strain ATCC 49188 / DSM 6882 / CCUG 24695 / JCM 21032 / LMG 3331 / NBRC 15819 / NCTC 12168 / Alc 37) (Ochrobactrum anthropi).